We begin with the raw amino-acid sequence, 207 residues long: Macrophage immunometabolism regulator (207 aa).

The residue at position 1 (Met1) is an N-acetylmethionine. The segment at 1–41 (MEVDINGDSRSTLTTLPLPVAEGSSPGKAEAEKPRCSSTPC) is disordered. Residues Ser25 and Ser167 each carry the phosphoserine modification.

This sequence belongs to the UNC119-binding protein family. As to quaternary structure, interacts with UNC119 and UNC119B; interaction preferentially takes place when UNC119 and UNC119B are unliganded with myristoylated proteins. In terms of tissue distribution, highly expressed in photoreceptors.

The protein resides in the cytoplasm. The protein localises to the cell projection. It is found in the cilium. In terms of biological role, regulates the macrophage function, by enhancing the resolution of inflammation and wound repair functions mediated by M2 macrophages. The regulation of macrophage function is, due at least in part, to its ability to inhibit glycolysis. May also play a role in trafficking of proteins via its interaction with UNC119 and UNC119B cargo adapters: may help the release of UNC119 and UNC119B cargo or the recycling of UNC119 and UNC119B. May play a role in ciliary membrane localization via its interaction with UNC119B and protein transport into photoreceptor cells. In Mus musculus (Mouse), this protein is Macrophage immunometabolism regulator.